The primary structure comprises 370 residues: Acyl-CoA:lysophosphatidylglycerol acyltransferase 1 (370 aa).

Residues 22 to 42 form a helical membrane-spanning segment; it reads FAFMVVNNLVAIPSYICYVII. The HXXXXD motif motif lies at 101–106; it reads HQATGD. A helical transmembrane segment spans residues 342 to 362; it reads LWIFLIQSFAFLSGYMWYNII.

It belongs to the 1-acyl-sn-glycerol-3-phosphate acyltransferase family. In terms of tissue distribution, highly expressed in liver and placenta. Also expressed in peripheral blood, lung, kidney and brain. Detected at lower levels in colon. High expression is detected in brain and testis.

The protein resides in the endoplasmic reticulum membrane. It catalyses the reaction a 2-acyl-sn-glycero-3-phosphoethanolamine + octadecanoyl-CoA = 1-octadecanoyl-2-acyl-sn-glycero-3-phosphoethanolamine + CoA. The catalysed reaction is 2-(9Z-octadecenoyl)-sn-glycero-3-phosphoethanolamine + octadecanoyl-CoA = 1-octadecanoyl-2-(9Z-octadecenoyl)-sn-glycero-3-phosphoethanolamine + CoA. It carries out the reaction a 2-acyl-sn-glycero-3-phosphoethanolamine + hexadecanoyl-CoA = 1-hexadecanoyl-2-acyl-sn-glycero-3-phosphoethanolamine + CoA. The enzyme catalyses 2-(9Z-octadecenoyl)-sn-glycero-3-phosphoethanolamine + hexadecanoyl-CoA = 1-hexadecanoyl-2-(9Z-octadecenoyl)-sn-glycero-3-phosphoethanolamine + CoA. It catalyses the reaction 1-tetradecanoyl-sn-glycero-3-phospho-(1'-sn-glycerol) + hexadecanoyl-CoA = 1-tetradecanoyl-2-hexadecanoyl-sn-glycero-3-phospho-(1'-sn-glycerol) + CoA. The catalysed reaction is 1-hexadecanoyl-sn-glycero-3-phospho-(1'-sn-glycerol) + dodecanoyl-CoA = 1-hexadecanoyl-2-dodecanoyl-sn-glycero-3-phospho-(1'-sn-glycerol) + CoA. It carries out the reaction 1-hexadecanoyl-sn-glycero-3-phospho-(1'-sn-glycerol) + hexadecanoyl-CoA = 1,2-dihexadecanoyl-sn-glycero-3-phospho-(1'-sn-glycerol) + CoA. The enzyme catalyses 1-hexadecanoyl-sn-glycero-3-phospho-(1'-sn-glycerol) + octadecanoyl-CoA = 1-hexadecanoyl-2-octadecanoyl-sn-glycero-3-phospho-(1'-sn-glycerol) + CoA. It catalyses the reaction 1-octadecanoyl-sn-glycero-3-phospho-(1'-sn-glycerol) + hexadecanoyl-CoA = 1-octadecanoyl-2-hexadecanoyl-sn-glycero-3-phospho-(1'-sn-glycerol) + CoA. The catalysed reaction is 1-(9Z-octadecenoyl)-sn-glycero-3-phospho-(1'-sn-glycerol) + dodecanoyl-CoA = 1-(9Z-octadecenoyl)-2-dodecanoyl-sn-glycero-3-phospho-(1'-sn-glycerol) + CoA. It carries out the reaction 1-hexadecanoyl-sn-glycero-3-phospho-(1'-sn-glycerol) + (9Z)-octadecenoyl-CoA = 1-hexadecanoyl-2-(9Z-octadecenoyl)-sn-glycero-3-phospho-(1'-sn-glycerol) + CoA. The enzyme catalyses 1-(9Z-octadecenoyl)-sn-glycero-3-phospho-(1'-sn-glycerol) + hexadecanoyl-CoA = 1-(9Z-octadecenoyl)-2-hexadecanoyl-sn-glycero-3-phospho-(1'-sn-glycerol) + CoA. It catalyses the reaction 1-(9Z-octadecenoyl)-sn-glycero-3-phospho-(1'-sn-glycerol) + (9Z)-octadecenoyl-CoA = 1,2-di-(9Z-octadecenoyl)-sn-glycero-3-phospho-(1'-sn-glycerol) + CoA. The catalysed reaction is a 2-acylglycerol + an acyl-CoA = a 1,2-diacylglycerol + CoA. It carries out the reaction a 2-acylglycerol + hexadecanoyl-CoA = a 1-hexadecanoyl-2-acylglycerol + CoA. The enzyme catalyses a 1-acylglycerol + hexadecanoyl-CoA = an hexadecanoyl-acylglycerol + CoA. It catalyses the reaction a 2-acyl-sn-glycero-3-phosphocholine + an acyl-CoA = a 1,2-diacyl-sn-glycero-3-phosphocholine + CoA. The catalysed reaction is 2-(9Z-octadecenoyl)-sn-glycero-3-phosphocholine + octadecanoyl-CoA = 1-octadecanoyl-2-(9Z-octadecenoyl)-sn-glycero-3-phosphocholine + CoA. It carries out the reaction 2-(9Z,12Z-octadecadienoyl)-sn-glycero-3-phosphocholine + octadecanoyl-CoA = 1-octadecanoyl-2-(9Z,12Z)-octadecadienoyl-sn-glycero-3-phosphocholine + CoA. The enzyme catalyses 2-(5Z,8Z,11Z,14Z)-eicosatetraenoyl-sn-glycero-3-phosphocholine + octadecanoyl-CoA = 1-octadecanoyl-2-(5Z,8Z,11Z,14Z-eicosatetraenoyl)-sn-glycero-3-phosphocholine + CoA. It catalyses the reaction 2-(9Z-octadecenoyl)-sn-glycero-3-phosphocholine + hexadecanoyl-CoA = 1-hexadecanoyl-2-(9Z-octadecenoyl)-sn-glycero-3-phosphocholine + CoA. The catalysed reaction is 2-(9Z-octadecenoyl)-sn-glycero-3-phospho-L-serine + hexadecanoyl-CoA = 1-hexadecanoyl-2-(9Z-octadecenoyl)-sn-glycero-3-phospho-L-serine + CoA. It carries out the reaction 2-(4Z,7Z,10Z,13Z,16Z,19Z-docosahexaenoyl)-sn-glycero-3-phosphocholine + octadecanoyl-CoA = 1-octadecanoyl-2-(4Z,7Z,10Z,13Z,16Z,19Z-docosahexaenoyl)-sn-glycero-3-phosphocholine + CoA. The enzyme catalyses 1-(9Z-octadecenoyl)-sn-glycero-3-phospho-L-serine + octadecanoyl-CoA = 1-(9Z-octadecenoyl)-2-octadecanoyl-sn-glycero-3-phospho-L-serine + CoA. It catalyses the reaction a 2-acyl-sn-glycero-3-phosphoethanolamine + a fatty acyl-CoA = a 1,2-diacyl-sn-glycero-3-phosphoethanolamine + CoA. In terms of biological role, lysophospholipid acyltransferase involved in fatty acyl chain remodeling of glycerophospholipids in the endoplasmic reticulum membrane. Selectively catalyzes the transfer and esterification of saturated long-chain fatty acids from acyl-CoA to the sn-1 position of 1-lyso-2-acyl phosphatidylethanolamines (1-lyso-PE, LPE), with a preference for stearoyl CoA over palmitoyl CoA as acyl donor. Acts in concert with an unknown phospholipase A1 to convert palmitate phosphatidylethanolamine (PE) species into stearate ones. Provides substrates to the PE methylation pathway, controlling stearate/palmitate composition of PE and phosphatidylcholine (PC) species with an overall impact on de novo hepatic lipid synthesis, body fat content and life span. Can acylate lysophosphatidylglycerols (LPG) using various saturated fatty acyl-CoAs as acyl donors. Can also acylate monoacylglycerols with a preference for 2-monoacylglycerols over 1-monoacylglycerols. Has no activity toward lysophosphatidic acids (LPA). The sequence is that of Acyl-CoA:lysophosphatidylglycerol acyltransferase 1 from Homo sapiens (Human).